A 93-amino-acid polypeptide reads, in one-letter code: Cobalt transport protein CbiN (93 aa).

The next 2 membrane-spanning stretches (helical) occupy residues 5-25 (LILL…NHGG) and 63-83 (LLFT…LGYA).

Belongs to the CbiN family. As to quaternary structure, forms an energy-coupling factor (ECF) transporter complex composed of an ATP-binding protein (A component, CbiO), a transmembrane protein (T component, CbiQ) and 2 possible substrate-capture proteins (S components, CbiM and CbiN) of unknown stoichimetry.

Its subcellular location is the cell inner membrane. Its pathway is cofactor biosynthesis; adenosylcobalamin biosynthesis. Functionally, part of the energy-coupling factor (ECF) transporter complex CbiMNOQ involved in cobalt import. This chain is Cobalt transport protein CbiN, found in Klebsiella pneumoniae subsp. pneumoniae (strain ATCC 700721 / MGH 78578).